We begin with the raw amino-acid sequence, 501 residues long: Lysine--tRNA ligase (501 aa).

Positions 410 and 417 each coordinate Mg(2+).

This sequence belongs to the class-II aminoacyl-tRNA synthetase family. In terms of assembly, homodimer. Requires Mg(2+) as cofactor.

The protein resides in the cytoplasm. It carries out the reaction tRNA(Lys) + L-lysine + ATP = L-lysyl-tRNA(Lys) + AMP + diphosphate. This Shewanella pealeana (strain ATCC 700345 / ANG-SQ1) protein is Lysine--tRNA ligase.